A 305-amino-acid polypeptide reads, in one-letter code: Glycine--tRNA ligase alpha subunit (305 aa).

This sequence belongs to the class-II aminoacyl-tRNA synthetase family. Tetramer of two alpha and two beta subunits.

The protein resides in the cytoplasm. It catalyses the reaction tRNA(Gly) + glycine + ATP = glycyl-tRNA(Gly) + AMP + diphosphate. The protein is Glycine--tRNA ligase alpha subunit of Streptococcus uberis (strain ATCC BAA-854 / 0140J).